A 210-amino-acid polypeptide reads, in one-letter code: NADH dehydrogenase [ubiquinone] iron-sulfur protein 8, mitochondrial (210 aa).

The N-terminal 34 residues, 1 to 34 (MRCLTTPMLLRALAQAARAGPPCGRSLHSSAVAA), are a transit peptide targeting the mitochondrion. 4Fe-4S ferredoxin-type domains follow at residues 102-131 (RRYP…IEAE) and 141-170 (TRYD…EGPN). [4Fe-4S] cluster-binding residues include cysteine 111, cysteine 114, cysteine 117, cysteine 121, cysteine 150, cysteine 153, cysteine 156, and cysteine 160.

It belongs to the complex I 23 kDa subunit family. Core subunit of respiratory chain NADH dehydrogenase (Complex I) which is composed of 45 different subunits. This is a component of the iron-sulfur (IP) fragment of the enzyme. Interacts with RAB5IF. [4Fe-4S] cluster serves as cofactor.

It localises to the mitochondrion inner membrane. It catalyses the reaction a ubiquinone + NADH + 5 H(+)(in) = a ubiquinol + NAD(+) + 4 H(+)(out). Functionally, core subunit of the mitochondrial membrane respiratory chain NADH dehydrogenase (Complex I) which catalyzes electron transfer from NADH through the respiratory chain, using ubiquinone as an electron acceptor. Essential for the catalytic activity and assembly of complex I. The polypeptide is NADH dehydrogenase [ubiquinone] iron-sulfur protein 8, mitochondrial (NDUFS8) (Pongo abelii (Sumatran orangutan)).